Reading from the N-terminus, the 464-residue chain is Gamma-aminobutyric acid receptor subunit alpha-5 (464 aa).

The signal sequence occupies residues 1–25 (MDNGMLSRFIMTKTLLVFCISMTLS). Topologically, residues 26–260 (SHFGFSQMPT…FHLKRKIGYF (235 aa)) are extracellular. N45 is a glycosylation site (N-linked (GlcNAc...) asparagine). R101 is a binding site for 4-aminobutanoate. N-linked (GlcNAc...) asparagine glycosylation occurs at N145. T164 contributes to the 4-aminobutanoate binding site. Cysteines 173 and 187 form a disulfide. N-linked (GlcNAc...) asparagine glycans are attached at residues N207 and N236. The next 3 membrane-spanning stretches (helical) occupy residues 261-281 (VIQT…SFWL), 287-308 (PART…ISAR), and 319-340 (AMDW…EFAT). At 341 to 429 (VNYFTKRGWA…TYNSISKIDK (89 aa)) the chain is on the cytoplasmic side. Residue K355 forms a Glycyl lysine isopeptide (Lys-Gly) (interchain with G-Cter in ubiquitin) linkage. The tract at residues 382-414 (KLTHPPNIPKEQLPGGTGNAVGTASIRASEEKT) is disordered. The helical transmembrane segment at 430–450 (MSRIVFPILFGTFNLVYWATY) threads the bilayer.

This sequence belongs to the ligand-gated ion channel (TC 1.A.9) family. Gamma-aminobutyric acid receptor (TC 1.A.9.5) subfamily. GABRA5 sub-subfamily. Heteropentamer, formed by a combination of alpha (GABRA1-6), beta (GABRB1-3), gamma (GABRG1-3), delta (GABRD), epsilon (GABRE), rho (GABRR1-3), pi (GABRP) and theta (GABRQ) chains, each subunit exhibiting distinct physiological and pharmacological properties. As to expression, expressed in brain areas such as cerebral cortex, hippocampal formation and olfactory bulb granular layer.

It is found in the postsynaptic cell membrane. The protein resides in the cell membrane. It carries out the reaction chloride(in) = chloride(out). With respect to regulation, allosterically potentiated by alphaxalone. Allosterically inhibited by pregnenolone sulfate. Inhibited by zinc and lanthanum. Alpha subunit of the heteropentameric ligand-gated chloride channel gated by gamma-aminobutyric acid (GABA), a major inhibitory neurotransmitter in the brain. GABA-gated chloride channels, also named GABA(A) receptors (GABAAR), consist of five subunits arranged around a central pore and contain GABA active binding site(s) located at the alpha and beta subunit interface(s). When activated by GABA, GABAARs selectively allow the flow of chloride anions across the cell membrane down their electrochemical gradient. GABAARs containing alpha-5/GABRA5 subunits are mainly extrasynaptic and contribute to the tonic GABAergic inhibition in the hippocampus. Extrasynaptic alpha-5-containing GABAARs in CA1 pyramidal neurons play a role in learning and memory processes. This Rattus norvegicus (Rat) protein is Gamma-aminobutyric acid receptor subunit alpha-5.